The following is a 777-amino-acid chain: Spastin (777 aa).

Composition is skewed to low complexity over residues 1-24 (MVRT…KSNN), 51-76 (HAHS…SSSP), and 85-94 (DDLTPTGSSP). Residues 1–103 (MVRTKSSSSS…PRSCNGRGHS (103 aa)) form a disordered region. Residues 1–116 (MVRTKSSSSS…KQNLYVVSFP (116 aa)) are Cytoplasmic-facing. The interval 1 to 215 (MVRTKSSSSS…RALQPLEMAT (215 aa)) is required for localization to punctate cytoplasmic foci. Residues 117-137 (IIFLFNVLRSLIYQLFCIFRY) constitute an intramembrane region (helical). At 138 to 777 (LYGASTKVLY…WSQDYGDITI (640 aa)) the chain is on the cytoplasmic side. A sufficient for interaction with microtubules and microtubule severing region spans residues 213–777 (MATNRPGGGY…WSQDYGDITI (565 aa)). Residues 238-313 (HRRAFEYISK…SMARDRLHFL (76 aa)) form the MIT domain. The interval 327–474 (LKEKQPAPKQ…SSGSGASTPM (148 aa)) is disordered. Composition is skewed to polar residues over residues 372–389 (QNGT…TATG), 406–425 (PVTN…TTVG), and 444–460 (QFSS…RTPI). Residues 461 to 471 (NNNASSGSGAS) are compositionally biased toward low complexity. Residues 462 to 474 (NNASSGSGASTPM) form a required for interaction with microtubules region. 542–549 (GPPGNGKT) lines the ATP pocket.

It belongs to the AAA ATPase family. Spastin subfamily. As to quaternary structure, homohexamer. The homohexamer is stabilized by ATP-binding. The homohexamer may adopt a ring conformation through which microtubules pass prior to being severed. Interacts with microtubules. Interacts with atl; may be involved in microtubule dynamics.

It localises to the membrane. Its subcellular location is the cytoplasm. The protein localises to the cytoskeleton. It is found in the microtubule organizing center. The protein resides in the centrosome. It localises to the chromosome. Its subcellular location is the lipid droplet. It carries out the reaction n ATP + n H2O + a microtubule = n ADP + n phosphate + (n+1) alpha/beta tubulin heterodimers.. Its function is as follows. ATP-dependent microtubule severing protein. Stimulates microtubule minus-end depolymerization and poleward microtubule flux in the mitotic spindle. Regulates microtubule stability in the neuromuscular junction synapse. Involved in lipid metabolism by regulating the size and distribution of lipid droplets. Involved in axon regeneration by regulating microtubule severing. In Drosophila willistoni (Fruit fly), this protein is Spastin.